Reading from the N-terminus, the 173-residue chain is MALRPARCYRTTERRSYTRKEYVRAVPQPKVVHYVMGNSSVEFPVEVQLISKSDILIRHNALESSRIAGNKYILRECGRTGYLFNIRVYPHEILRENKMAAGAGADRISDGMRLSFGKAVGTAAKVKKGQEIITIGVNPEKFYAAKEALRRCSMKLPTACKIVVTKGQDLIRD.

This sequence belongs to the universal ribosomal protein uL16 family.

In Methanococcus maripaludis (strain C6 / ATCC BAA-1332), this protein is Large ribosomal subunit protein uL16.